A 460-amino-acid chain; its full sequence is GTPase Der (460 aa).

EngA-type G domains lie at 3–167 (FTFA…PEPD) and 189–364 (IRVA…ATWN). GTP is bound by residues 9-16 (GRPNVGKS), 56-60 (DTAGL), 119-122 (NKSE), 195-202 (GRPNAGKS), 242-246 (DTAGL), and 307-310 (NKWD). The 85-residue stretch at 365 to 449 (RRVPTAALNR…PVRIMLREKA (85 aa)) folds into the KH-like domain.

The protein belongs to the TRAFAC class TrmE-Era-EngA-EngB-Septin-like GTPase superfamily. EngA (Der) GTPase family. As to quaternary structure, associates with the 50S ribosomal subunit.

Its function is as follows. GTPase that plays an essential role in the late steps of ribosome biogenesis. In Rhodopseudomonas palustris (strain BisA53), this protein is GTPase Der.